Reading from the N-terminus, the 620-residue chain is Proline--tRNA ligase (620 aa).

It belongs to the class-II aminoacyl-tRNA synthetase family. ProS type 1 subfamily. Homodimer.

It localises to the cytoplasm. It carries out the reaction tRNA(Pro) + L-proline + ATP = L-prolyl-tRNA(Pro) + AMP + diphosphate. Its function is as follows. Catalyzes the attachment of proline to tRNA(Pro) in a two-step reaction: proline is first activated by ATP to form Pro-AMP and then transferred to the acceptor end of tRNA(Pro). As ProRS can inadvertently accommodate and process non-cognate amino acids such as alanine and cysteine, to avoid such errors it has two additional distinct editing activities against alanine. One activity is designated as 'pretransfer' editing and involves the tRNA(Pro)-independent hydrolysis of activated Ala-AMP. The other activity is designated 'posttransfer' editing and involves deacylation of mischarged Ala-tRNA(Pro). The misacylated Cys-tRNA(Pro) is not edited by ProRS. The sequence is that of Proline--tRNA ligase from Streptococcus thermophilus (strain CNRZ 1066).